A 443-amino-acid polypeptide reads, in one-letter code: Glucose-6-phosphate isomerase (443 aa).

Catalysis depends on Glu-285, which acts as the Proton donor. Active-site residues include His-306 and Lys-420.

This sequence belongs to the GPI family.

It localises to the cytoplasm. It carries out the reaction alpha-D-glucose 6-phosphate = beta-D-fructose 6-phosphate. It functions in the pathway carbohydrate biosynthesis; gluconeogenesis. It participates in carbohydrate degradation; glycolysis; D-glyceraldehyde 3-phosphate and glycerone phosphate from D-glucose: step 2/4. In terms of biological role, catalyzes the reversible isomerization of glucose-6-phosphate to fructose-6-phosphate. The chain is Glucose-6-phosphate isomerase from Staphylococcus aureus (strain Mu3 / ATCC 700698).